A 93-amino-acid chain; its full sequence is MKNKLKSALSFFTTLSNTVKQANKDIDAAKLKLTTEIAAIGVIKTETETTRFYVDYDDLMLSLLKEAAQKMINTCNEYQKRHGKKTLFEIPEV.

Belongs to the hemolysin E family.

In Escherichia coli O6:H1 (strain CFT073 / ATCC 700928 / UPEC), this protein is Putative hemolysin E-like protein.